Here is a 161-residue protein sequence, read N- to C-terminus: SsrA-binding protein (161 aa).

The interval 137-161 is disordered; it reads HDKRTDSKEKDWNRDKARIMKSSLR. Over residues 139-154 the composition is skewed to basic and acidic residues; that stretch reads KRTDSKEKDWNRDKAR.

It belongs to the SmpB family.

It localises to the cytoplasm. In terms of biological role, required for rescue of stalled ribosomes mediated by trans-translation. Binds to transfer-messenger RNA (tmRNA), required for stable association of tmRNA with ribosomes. tmRNA and SmpB together mimic tRNA shape, replacing the anticodon stem-loop with SmpB. tmRNA is encoded by the ssrA gene; the 2 termini fold to resemble tRNA(Ala) and it encodes a 'tag peptide', a short internal open reading frame. During trans-translation Ala-aminoacylated tmRNA acts like a tRNA, entering the A-site of stalled ribosomes, displacing the stalled mRNA. The ribosome then switches to translate the ORF on the tmRNA; the nascent peptide is terminated with the 'tag peptide' encoded by the tmRNA and targeted for degradation. The ribosome is freed to recommence translation, which seems to be the essential function of trans-translation. In Aliivibrio salmonicida (strain LFI1238) (Vibrio salmonicida (strain LFI1238)), this protein is SsrA-binding protein.